Here is a 572-residue protein sequence, read N- to C-terminus: 2-isopropylmalate synthase (572 aa).

One can recognise a Pyruvate carboxyltransferase domain in the interval 31-305; sequence PIWMSTDLRD…DPGLDFSNIN (275 aa). Mg(2+) contacts are provided by D40, H244, H246, and N280. A regulatory domain region spans residues 437-572; that stretch reads NTAPIHYVGH…MNDAAESVGV (136 aa).

It belongs to the alpha-IPM synthase/homocitrate synthase family. LeuA type 2 subfamily. Homodimer. The cofactor is Mg(2+).

The protein localises to the cytoplasm. The catalysed reaction is 3-methyl-2-oxobutanoate + acetyl-CoA + H2O = (2S)-2-isopropylmalate + CoA + H(+). Its pathway is amino-acid biosynthesis; L-leucine biosynthesis; L-leucine from 3-methyl-2-oxobutanoate: step 1/4. In terms of biological role, catalyzes the condensation of the acetyl group of acetyl-CoA with 3-methyl-2-oxobutanoate (2-ketoisovalerate) to form 3-carboxy-3-hydroxy-4-methylpentanoate (2-isopropylmalate). The chain is 2-isopropylmalate synthase from Paraburkholderia phytofirmans (strain DSM 17436 / LMG 22146 / PsJN) (Burkholderia phytofirmans).